A 308-amino-acid polypeptide reads, in one-letter code: tRNA pseudouridine synthase B (308 aa).

Aspartate 48 acts as the Nucleophile in catalysis.

It belongs to the pseudouridine synthase TruB family. Type 1 subfamily.

It catalyses the reaction uridine(55) in tRNA = pseudouridine(55) in tRNA. Its function is as follows. Responsible for synthesis of pseudouridine from uracil-55 in the psi GC loop of transfer RNAs. The polypeptide is tRNA pseudouridine synthase B (Histophilus somni (strain 129Pt) (Haemophilus somnus)).